The chain runs to 215 residues: Probable phosphoglycerate mutase GpmB (215 aa).

Substrate-binding positions include 8 to 15, 21 to 22, Arg-58, Arg-60, 82 to 85, and 151 to 152; these read RHGETEWN, QG, ELHM, and GI. His-9 (tele-phosphohistidine intermediate) is an active-site residue. The active-site Proton donor/acceptor is the Glu-82.

The protein belongs to the phosphoglycerate mutase family. GpmB subfamily.

It carries out the reaction (2R)-2-phosphoglycerate = (2R)-3-phosphoglycerate. It functions in the pathway carbohydrate degradation; glycolysis; pyruvate from D-glyceraldehyde 3-phosphate: step 3/5. In Serratia proteamaculans (strain 568), this protein is Probable phosphoglycerate mutase GpmB.